The sequence spans 240 residues: Thymidylate kinase (240 aa).

10-17 provides a ligand contact to ATP; the sequence is GINGVGKS.

It belongs to the thymidylate kinase family.

The enzyme catalyses dTMP + ATP = dTDP + ADP. It functions in the pathway pyrimidine metabolism; dTTP biosynthesis. In terms of biological role, catalyzes the conversion of dTMP to dTDP. The protein is Thymidylate kinase (TMK) of African swine fever virus (strain Badajoz 1971 Vero-adapted) (Ba71V).